Here is a 251-residue protein sequence, read N- to C-terminus: Capsid protein (251 aa).

Residues 1 to 35 (MPKRDAPWRHMAGTSKVSRSGNYSPSGGMGSKSNK) form a disordered region. Positions 3–20 (KRDAPWRHMAGTSKVSRS) match the Bipartite nuclear localization signal motif. Over residues 15-35 (SKVSRSGNYSPSGGMGSKSNK) the composition is skewed to polar residues. Positions 35 to 49 (KANAWVNRPMYRKPR) match the Nuclear localization signal motif. A zinc finger spans residues 54–71 (YKSPDVPKGCEGPCKVQS). The Nuclear export signal motif lies at 96-117 (ITHRVGKRFCVKSVYILGKIWM). Positions 195-242 (RRFWKVNNHVVYNHQEAGKYENHTENALLLYMACTHASNPVYATLKIR) match the Bipartite nuclear localization signal motif.

It belongs to the geminiviridae capsid protein family. In terms of assembly, homomultimer. Binds to single-stranded and double-stranded viral DNA. Interacts (via nuclear localization signals) with host importin alpha-1a.

It is found in the virion. It localises to the host nucleus. In terms of biological role, encapsidates the viral DNA into characteristic twinned ('geminate') particles. Binds the genomic viral ssDNA and shuttles it into and out of the cell nucleus. The CP of bipartite geminiviruses is not required for cell-to-cell or systemic movement. The protein is Capsid protein of Macroptilium lathyroides (Lima bean).